The following is a 319-amino-acid chain: 4-hydroxy-3-methylbut-2-enyl diphosphate reductase (319 aa).

Residue C12 participates in [4Fe-4S] cluster binding. Positions 41 and 74 each coordinate (2E)-4-hydroxy-3-methylbut-2-enyl diphosphate. Residues H41 and H74 each coordinate dimethylallyl diphosphate. Isopentenyl diphosphate contacts are provided by H41 and H74. C96 serves as a coordination point for [4Fe-4S] cluster. Residue H124 coordinates (2E)-4-hydroxy-3-methylbut-2-enyl diphosphate. H124 lines the dimethylallyl diphosphate pocket. Residue H124 participates in isopentenyl diphosphate binding. E126 (proton donor) is an active-site residue. T167 contributes to the (2E)-4-hydroxy-3-methylbut-2-enyl diphosphate binding site. C197 serves as a coordination point for [4Fe-4S] cluster. Residues S225, S226, N227, and S269 each contribute to the (2E)-4-hydroxy-3-methylbut-2-enyl diphosphate site. Dimethylallyl diphosphate contacts are provided by S225, S226, N227, and S269. Isopentenyl diphosphate is bound by residues S225, S226, N227, and S269.

This sequence belongs to the IspH family. Homodimer. It depends on [4Fe-4S] cluster as a cofactor.

The enzyme catalyses isopentenyl diphosphate + 2 oxidized [2Fe-2S]-[ferredoxin] + H2O = (2E)-4-hydroxy-3-methylbut-2-enyl diphosphate + 2 reduced [2Fe-2S]-[ferredoxin] + 2 H(+). It carries out the reaction dimethylallyl diphosphate + 2 oxidized [2Fe-2S]-[ferredoxin] + H2O = (2E)-4-hydroxy-3-methylbut-2-enyl diphosphate + 2 reduced [2Fe-2S]-[ferredoxin] + 2 H(+). Its pathway is isoprenoid biosynthesis; dimethylallyl diphosphate biosynthesis; dimethylallyl diphosphate from (2E)-4-hydroxy-3-methylbutenyl diphosphate: step 1/1. The protein operates within isoprenoid biosynthesis; isopentenyl diphosphate biosynthesis via DXP pathway; isopentenyl diphosphate from 1-deoxy-D-xylulose 5-phosphate: step 6/6. Functionally, catalyzes the conversion of 1-hydroxy-2-methyl-2-(E)-butenyl 4-diphosphate (HMBPP) into a mixture of isopentenyl diphosphate (IPP) and dimethylallyl diphosphate (DMAPP). Acts in the terminal step of the DOXP/MEP pathway for isoprenoid precursor biosynthesis. In Buchnera aphidicola subsp. Acyrthosiphon pisum (strain Tuc7), this protein is 4-hydroxy-3-methylbut-2-enyl diphosphate reductase.